The chain runs to 116 residues: Non-specific lipid-transfer protein AP10 (116 aa).

The N-terminal stretch at 1–26 is a signal peptide; sequence MKGTSMGVAILAMIVMAQLMVHPSVA. Cystine bridges form between Cys29–Cys76, Cys39–Cys53, Cys54–Cys98, and Cys74–Cys112.

The protein belongs to the plant LTP family. In terms of tissue distribution, in germinating seeds, detected in the entire surface of the cotyledons, shoot meristem, inter-cotyledon space, primary xylem and immature vascular elements (at protein level). Expressed in seeds, but not the aerial parts of the plant.

Its subcellular location is the secreted. It is found in the extracellular space. It localises to the membrane. Functionally, plant non-specific lipid-transfer proteins transfer phospholipids as well as galactolipids across membranes. May play a role in wax or cutin deposition in the cell walls of expanding epidermal cells and certain secretory tissues. Permeabilizes the membrane of fungal spores, inhibits germination of the spores of the fungus F.solani at a concentration of 40 ug/ml. Inhibits the growth of F.solani with an IC(50) of 6.5 ug/ml, weakly inhibits the growth of the fungus A.alternata. Binds oleoyl-CoA. This Helianthus annuus (Common sunflower) protein is Non-specific lipid-transfer protein AP10.